Here is a 49-residue protein sequence, read N- to C-terminus: Large ribosomal subunit protein bL33A (49 aa).

Belongs to the bacterial ribosomal protein bL33 family.

This is Large ribosomal subunit protein bL33A from Limosilactobacillus reuteri subsp. reuteri (strain JCM 1112) (Lactobacillus reuteri).